Reading from the N-terminus, the 288-residue chain is Quinate/shikimate dehydrogenase (288 aa).

2 residues coordinate substrate: K71 and D107. Residues 132 to 135 (AGGA), 155 to 158 (NRRD), K205, 232 to 235 (CVYN), and G255 each bind NAD(+).

The protein belongs to the shikimate dehydrogenase family. Homodimer.

It catalyses the reaction L-quinate + NAD(+) = 3-dehydroquinate + NADH + H(+). It carries out the reaction L-quinate + NADP(+) = 3-dehydroquinate + NADPH + H(+). The enzyme catalyses shikimate + NADP(+) = 3-dehydroshikimate + NADPH + H(+). The catalysed reaction is shikimate + NAD(+) = 3-dehydroshikimate + NADH + H(+). It participates in metabolic intermediate biosynthesis; chorismate biosynthesis; chorismate from D-erythrose 4-phosphate and phosphoenolpyruvate: step 4/7. Its function is as follows. The actual biological function of YdiB remains unclear, nor is it known whether 3-dehydroshikimate or quinate represents the natural substrate. Catalyzes the reversible NAD-dependent reduction of both 3-dehydroshikimate (DHSA) and 3-dehydroquinate to yield shikimate (SA) and quinate, respectively. It can use both NAD or NADP for catalysis, however it has higher catalytic efficiency with NAD. The chain is Quinate/shikimate dehydrogenase from Escherichia coli (strain 55989 / EAEC).